The following is a 273-amino-acid chain: Ribosomal RNA small subunit methyltransferase A (273 aa).

Positions 18, 20, 45, 66, 91, and 113 each coordinate S-adenosyl-L-methionine.

This sequence belongs to the class I-like SAM-binding methyltransferase superfamily. rRNA adenine N(6)-methyltransferase family. RsmA subfamily.

Its subcellular location is the cytoplasm. It catalyses the reaction adenosine(1518)/adenosine(1519) in 16S rRNA + 4 S-adenosyl-L-methionine = N(6)-dimethyladenosine(1518)/N(6)-dimethyladenosine(1519) in 16S rRNA + 4 S-adenosyl-L-homocysteine + 4 H(+). Specifically dimethylates two adjacent adenosines (A1518 and A1519) in the loop of a conserved hairpin near the 3'-end of 16S rRNA in the 30S particle. May play a critical role in biogenesis of 30S subunits. The polypeptide is Ribosomal RNA small subunit methyltransferase A (Salmonella typhimurium (strain LT2 / SGSC1412 / ATCC 700720)).